The primary structure comprises 245 residues: 1-(5-phosphoribosyl)-5-[(5-phosphoribosylamino)methylideneamino] imidazole-4-carboxamide isomerase (245 aa).

Aspartate 7 (proton acceptor) is an active-site residue. Catalysis depends on aspartate 129, which acts as the Proton donor.

Belongs to the HisA/HisF family.

It is found in the cytoplasm. It catalyses the reaction 1-(5-phospho-beta-D-ribosyl)-5-[(5-phospho-beta-D-ribosylamino)methylideneamino]imidazole-4-carboxamide = 5-[(5-phospho-1-deoxy-D-ribulos-1-ylimino)methylamino]-1-(5-phospho-beta-D-ribosyl)imidazole-4-carboxamide. It participates in amino-acid biosynthesis; L-histidine biosynthesis; L-histidine from 5-phospho-alpha-D-ribose 1-diphosphate: step 4/9. This chain is 1-(5-phosphoribosyl)-5-[(5-phosphoribosylamino)methylideneamino] imidazole-4-carboxamide isomerase, found in Shewanella baltica (strain OS223).